The following is a 691-amino-acid chain: Gex-3-interacting protein 13 (691 aa).

2 disordered regions span residues 18 to 97 and 171 to 195; these read TASL…SAHL and PASP…KRQR. The span at 31-46 shows a compositional bias: low complexity; it reads SSFTTTSESTSPPYSS. The span at 47-57 shows a compositional bias: basic and acidic residues; the sequence is SEHHSPTDQRT. Over residues 58 to 79 the composition is skewed to polar residues; it reads ETPTSDSGNASFSPENVATSFE. The segment covering 171 to 183 has biased composition (low complexity); that stretch reads PASPCTTAASAPS. 2 BED-type zinc fingers span residues 194–242 and 424–473; these read QRRN…YEKV and LRRH…YEKV. Residues cysteine 212, cysteine 215, histidine 230, histidine 235, cysteine 443, cysteine 446, histidine 461, and histidine 466 each contribute to the Zn(2+) site.

As to quaternary structure, interacts with gex-3.

In Caenorhabditis elegans, this protein is Gex-3-interacting protein 13 (gei-13).